The chain runs to 395 residues: Nucleoside diphosphate kinase homolog 7 (395 aa).

A DM10 domain is found at 22-110 (QSERFAFIAE…YTARQLGSRK (89 aa)).

This sequence belongs to the NDK family. As to quaternary structure, component of sperm flagellar doublet microtubules. Component of the gamma-tubulin ring complex. Widely expressed. Expressed in the flagellum of epididymal sperm but not in testicular sperm (at protein level).

The protein localises to the cytoplasm. It localises to the cytoskeleton. Its subcellular location is the microtubule organizing center. The protein resides in the centrosome. It is found in the nucleus. The protein localises to the spindle. It localises to the cilium axoneme. Its subcellular location is the flagellum axoneme. The protein resides in the cell projection. It is found in the cilium. Its function is as follows. Possesses an intrinsic kinase activity. Displays 3'-5' exonuclease activity with a preference for single-stranded DNA. Does not seem to have nucleoside diphosphate kinase activity. Functional component of the gamma-tubulin ring complex, implicated in the regulation of the microtubule-nucleating activity of the gamma-tubulin ring complex in centrosomes, in a kinase activity-dependent manner. Part of the dynein-decorated doublet microtubules (DMTs) in cilia axoneme, which is required for motile cilia beating. In Rattus norvegicus (Rat), this protein is Nucleoside diphosphate kinase homolog 7 (Nme7).